Consider the following 192-residue polypeptide: UPF0312 protein ECA1782 (192 aa).

An N-terminal signal peptide occupies residues 1–23 (MLKKTLLSLTAVSMLASAGSALA).

The protein belongs to the UPF0312 family. Type 1 subfamily.

Its subcellular location is the periplasm. This is UPF0312 protein ECA1782 from Pectobacterium atrosepticum (strain SCRI 1043 / ATCC BAA-672) (Erwinia carotovora subsp. atroseptica).